A 206-amino-acid chain; its full sequence is Large ribosomal subunit protein uL4 (206 aa).

This sequence belongs to the universal ribosomal protein uL4 family. Part of the 50S ribosomal subunit.

One of the primary rRNA binding proteins, this protein initially binds near the 5'-end of the 23S rRNA. It is important during the early stages of 50S assembly. It makes multiple contacts with different domains of the 23S rRNA in the assembled 50S subunit and ribosome. Its function is as follows. Forms part of the polypeptide exit tunnel. The chain is Large ribosomal subunit protein uL4 from Paracoccus denitrificans (strain Pd 1222).